Consider the following 375-residue polypeptide: Succinyl-diaminopimelate desuccinylase (375 aa).

His66 is a Zn(2+) binding site. Residue Asp68 is part of the active site. Position 99 (Asp99) interacts with Zn(2+). The active-site Proton acceptor is the Glu133. 3 residues coordinate Zn(2+): Glu134, Glu162, and His348.

Belongs to the peptidase M20A family. DapE subfamily. Homodimer. Zn(2+) is required as a cofactor. It depends on Co(2+) as a cofactor.

The enzyme catalyses N-succinyl-(2S,6S)-2,6-diaminopimelate + H2O = (2S,6S)-2,6-diaminopimelate + succinate. It participates in amino-acid biosynthesis; L-lysine biosynthesis via DAP pathway; LL-2,6-diaminopimelate from (S)-tetrahydrodipicolinate (succinylase route): step 3/3. Catalyzes the hydrolysis of N-succinyl-L,L-diaminopimelic acid (SDAP), forming succinate and LL-2,6-diaminopimelate (DAP), an intermediate involved in the bacterial biosynthesis of lysine and meso-diaminopimelic acid, an essential component of bacterial cell walls. In Teredinibacter turnerae (strain ATCC 39867 / T7901), this protein is Succinyl-diaminopimelate desuccinylase.